Consider the following 484-residue polypeptide: Aspartyl/glutamyl-tRNA(Asn/Gln) amidotransferase subunit B (484 aa).

This sequence belongs to the GatB/GatE family. GatB subfamily. Heterotrimer of A, B and C subunits.

It catalyses the reaction L-glutamyl-tRNA(Gln) + L-glutamine + ATP + H2O = L-glutaminyl-tRNA(Gln) + L-glutamate + ADP + phosphate + H(+). The enzyme catalyses L-aspartyl-tRNA(Asn) + L-glutamine + ATP + H2O = L-asparaginyl-tRNA(Asn) + L-glutamate + ADP + phosphate + 2 H(+). Functionally, allows the formation of correctly charged Asn-tRNA(Asn) or Gln-tRNA(Gln) through the transamidation of misacylated Asp-tRNA(Asn) or Glu-tRNA(Gln) in organisms which lack either or both of asparaginyl-tRNA or glutaminyl-tRNA synthetases. The reaction takes place in the presence of glutamine and ATP through an activated phospho-Asp-tRNA(Asn) or phospho-Glu-tRNA(Gln). The protein is Aspartyl/glutamyl-tRNA(Asn/Gln) amidotransferase subunit B of Bordetella bronchiseptica (strain ATCC BAA-588 / NCTC 13252 / RB50) (Alcaligenes bronchisepticus).